Consider the following 282-residue polypeptide: MFDFIKSIIIGIVEGLTEFLPVSSTGHIILAEALMKIPGGMVWTKSFTAVFDYAIQLGAIFAVIQLYFHKLNPFSPRKTSREQFQTWRLWIKVIVGVLPAMVFGLLLNNFMDAHLLNPWVVSATLIIYGIAFIVIENRQKNIAPVVTEVNRITFKMALFIGLFQVLSLVPGTSRSGATILGAVILGASRFVAAEFSFFLSIPVMFGVTILKVGSFLLKGGSFTGAQLFVMLIGFVVSWVVALFAIKVMMRYIQNNDFKIFGWYRIVVGILFLILGIAGLVKM.

8 consecutive transmembrane segments (helical) span residues 2–22 (FDFI…FLPV), 47–67 (FTAV…IQLY), 90–110 (WIKV…LNNF), 115–135 (LLNP…FIVI), 152–172 (ITFK…VPGT), 190–210 (FVAA…VTIL), 225–245 (AQLF…LFAI), and 259–279 (IFGW…IAGL).

Belongs to the UppP family.

The protein resides in the cell membrane. It carries out the reaction di-trans,octa-cis-undecaprenyl diphosphate + H2O = di-trans,octa-cis-undecaprenyl phosphate + phosphate + H(+). Catalyzes the dephosphorylation of undecaprenyl diphosphate (UPP). Confers resistance to bacitracin. The protein is Undecaprenyl-diphosphatase of Leuconostoc citreum (strain KM20).